Consider the following 566-residue polypeptide: Developmental regulatory protein wetA (566 aa).

Disordered regions lie at residues 116–174 (VPAV…LMRP), 232–316 (STEG…SDSL), 334–364 (AWWPSMPSRVPRQPSYQHVVSSPAPQRSIQS), 381–400 (SSFDGSTSADPSFSSVVTSA), and 429–542 (PPVQ…RRRK). 2 stretches are compositionally biased toward polar residues: residues 165 to 174 (QSFSPSLMRP) and 269 to 291 (AQQQQHNYLSQSNNSTMATSSPP). Positions 298-316 (SSPHSSDPQSLSSWHSDSL) are enriched in low complexity. Composition is skewed to polar residues over residues 347–364 (PSYQHVVSSPAPQRSIQS) and 381–398 (SSFDGSTSADPSFSSVVT). The span at 435 to 448 (SRSPSLSPRGRGSP) shows a compositional bias: low complexity. Residues 449–462 (TQGSPLRNEASTKT) show a composition bias toward polar residues. Residues 463–473 (SPHRRGYHGRK) are compositionally biased toward basic residues. Low complexity predominate over residues 482–500 (PKPVKGPNSSSPGSGSNKS). Residues 501–511 (LTVSFVNFTPN) are compositionally biased toward polar residues.

This sequence belongs to the wetA family.

In terms of biological role, brlA, abaA and wetA are pivotal regulators of conidiophore development and conidium maturation. They act individually and together to regulate their own expression and that of numerous other sporulation-specific genes. Plays an essential role in the completion of conidial maturation and is essential for trehalose biogenesis in conidia. Negatively regulates expression of the melanin biosynthetic gene cluster. Also plays an a role in the early phase of fungal growth including proper hyphal branching. The polypeptide is Developmental regulatory protein wetA (Aspergillus fumigatus (strain ATCC MYA-4609 / CBS 101355 / FGSC A1100 / Af293) (Neosartorya fumigata)).